A 369-amino-acid chain; its full sequence is Anthranilate phosphoribosyltransferase (369 aa).

Residues Gly-99, 102–103, 109–112, 127–135, and Ser-139 each bind 5-phospho-alpha-D-ribose 1-diphosphate; these read GD, NVST, and KHGNRGVSS. Gly-99 lines the anthranilate pocket. Ser-111 lines the Mg(2+) pocket. Asn-130 is a binding site for anthranilate. Position 185 (Arg-185) interacts with anthranilate. Mg(2+)-binding residues include Asp-244 and Glu-245.

Belongs to the anthranilate phosphoribosyltransferase family. As to quaternary structure, homodimer. The cofactor is Mg(2+).

The enzyme catalyses N-(5-phospho-beta-D-ribosyl)anthranilate + diphosphate = 5-phospho-alpha-D-ribose 1-diphosphate + anthranilate. The protein operates within amino-acid biosynthesis; L-tryptophan biosynthesis; L-tryptophan from chorismate: step 2/5. In terms of biological role, catalyzes the transfer of the phosphoribosyl group of 5-phosphorylribose-1-pyrophosphate (PRPP) to anthranilate to yield N-(5'-phosphoribosyl)-anthranilate (PRA). This Psychrobacter sp. (strain PRwf-1) protein is Anthranilate phosphoribosyltransferase.